An 822-amino-acid chain; its full sequence is ATP-dependent zinc metalloprotease FtsH (822 aa).

Topologically, residues 1–76 are cytoplasmic; the sequence is MEFNKLELLI…NQKEPGKARK (76 aa). The segment covering 44-54 has biased composition (polar residues); that stretch reads SLDQPSDAPSN. Residues 44-71 are disordered; that stretch reads SLDQPSDAPSNNKKRNLDQPDNPNQKEP. Residues 77–97 form a helical membrane-spanning segment; the sequence is IIWSFIIIILVLGVLALIILS. Topologically, residues 98–251 are extracellular; it reads GFSFSATSLN…QSMSLPTSYS (154 aa). The helical transmembrane segment at 252-272 threads the bilayer; it reads FYTAASLVLSILPFILLIGII. The Cytoplasmic segment spans residues 273–822; the sequence is YYSMRKMGQA…SKESSSDKKK (550 aa). Residue 347 to 354 participates in ATP binding; the sequence is GPPGTGKT. Residue histidine 569 participates in Zn(2+) binding. Residue glutamate 570 is part of the active site. 2 residues coordinate Zn(2+): histidine 573 and aspartate 648. The segment covering 758 to 794 has biased composition (basic and acidic residues); the sequence is KKELEEKKKAEDLIRKAKKESEASSKEEKEMDVEKKV. Residues 758–822 are disordered; it reads KKELEEKKKA…SKESSSDKKK (65 aa). Positions 796 to 805 are enriched in low complexity; the sequence is KPSASSTEPT. Basic and acidic residues predominate over residues 812–822; that stretch reads PSKESSSDKKK.

The protein in the central section; belongs to the AAA ATPase family. This sequence in the C-terminal section; belongs to the peptidase M41 family. In terms of assembly, homohexamer. The cofactor is Zn(2+).

It is found in the cell membrane. Acts as a processive, ATP-dependent zinc metallopeptidase for both cytoplasmic and membrane proteins. Plays a role in the quality control of integral membrane proteins. The polypeptide is ATP-dependent zinc metalloprotease FtsH (Malacoplasma penetrans (strain HF-2) (Mycoplasma penetrans)).